The following is a 388-amino-acid chain: Succinate--CoA ligase [ADP-forming] subunit beta (388 aa).

The ATP-grasp domain maps to 9–245; the sequence is KELLASYGLP…KSQENERELK (237 aa). Residues Lys-46, 53-55, Glu-100, Tyr-103, and Glu-108 contribute to the ATP site; that span reads GRG. Residues Asn-200 and Asp-214 each coordinate Mg(2+). Substrate contacts are provided by residues Asn-265 and 322–324; that span reads GIV.

It belongs to the succinate/malate CoA ligase beta subunit family. As to quaternary structure, heterotetramer of two alpha and two beta subunits. The cofactor is Mg(2+).

The enzyme catalyses succinate + ATP + CoA = succinyl-CoA + ADP + phosphate. It catalyses the reaction GTP + succinate + CoA = succinyl-CoA + GDP + phosphate. It participates in carbohydrate metabolism; tricarboxylic acid cycle; succinate from succinyl-CoA (ligase route): step 1/1. Succinyl-CoA synthetase functions in the citric acid cycle (TCA), coupling the hydrolysis of succinyl-CoA to the synthesis of either ATP or GTP and thus represents the only step of substrate-level phosphorylation in the TCA. The beta subunit provides nucleotide specificity of the enzyme and binds the substrate succinate, while the binding sites for coenzyme A and phosphate are found in the alpha subunit. This chain is Succinate--CoA ligase [ADP-forming] subunit beta, found in Neisseria meningitidis serogroup A / serotype 4A (strain DSM 15465 / Z2491).